The following is a 258-amino-acid chain: Short-chain dehydrogenase reductase 3c (258 aa).

12–36 lines the NAD(+) pocket; the sequence is IITGGASGIGADAARLFTDHGAKVV. S144 contacts substrate. Y156 (proton acceptor) is an active-site residue.

This sequence belongs to the short-chain dehydrogenases/reductases (SDR) family.

In Arabidopsis thaliana (Mouse-ear cress), this protein is Short-chain dehydrogenase reductase 3c (SDR3c).